The sequence spans 288 residues: Acetyl-coenzyme A carboxylase carboxyl transferase subunit beta (288 aa).

In terms of domain architecture, CoA carboxyltransferase N-terminal spans 34-288 (LFAKCPGCKQ…TLLSFHGGVQ (255 aa)). Cysteine 38, cysteine 41, cysteine 56, and cysteine 59 together coordinate Zn(2+). A C4-type zinc finger spans residues 38–59 (CPGCKQAIYQKDLGQAKICPNC).

It belongs to the AccD/PCCB family. In terms of assembly, acetyl-CoA carboxylase is a heterohexamer composed of biotin carboxyl carrier protein (AccB), biotin carboxylase (AccC) and two subunits each of ACCase subunit alpha (AccA) and ACCase subunit beta (AccD). Zn(2+) serves as cofactor.

The protein resides in the cytoplasm. It catalyses the reaction N(6)-carboxybiotinyl-L-lysyl-[protein] + acetyl-CoA = N(6)-biotinyl-L-lysyl-[protein] + malonyl-CoA. It functions in the pathway lipid metabolism; malonyl-CoA biosynthesis; malonyl-CoA from acetyl-CoA: step 1/1. In terms of biological role, component of the acetyl coenzyme A carboxylase (ACC) complex. Biotin carboxylase (BC) catalyzes the carboxylation of biotin on its carrier protein (BCCP) and then the CO(2) group is transferred by the transcarboxylase to acetyl-CoA to form malonyl-CoA. The chain is Acetyl-coenzyme A carboxylase carboxyl transferase subunit beta from Streptococcus thermophilus (strain ATCC BAA-491 / LMD-9).